A 421-amino-acid polypeptide reads, in one-letter code: UDP-N-acetylglucosamine 1-carboxyvinyltransferase (421 aa).

Position 22–23 (Lys-22–Asn-23) interacts with phosphoenolpyruvate. Arg-93 provides a ligand contact to UDP-N-acetyl-alpha-D-glucosamine. Cys-117 serves as the catalytic Proton donor. Residue Cys-117 is modified to 2-(S-cysteinyl)pyruvic acid O-phosphothioketal. UDP-N-acetyl-alpha-D-glucosamine is bound by residues Arg-122 to Leu-126, Asp-308, and Val-330.

It belongs to the EPSP synthase family. MurA subfamily.

The protein localises to the cytoplasm. It catalyses the reaction phosphoenolpyruvate + UDP-N-acetyl-alpha-D-glucosamine = UDP-N-acetyl-3-O-(1-carboxyvinyl)-alpha-D-glucosamine + phosphate. It participates in cell wall biogenesis; peptidoglycan biosynthesis. Its function is as follows. Cell wall formation. Adds enolpyruvyl to UDP-N-acetylglucosamine. In Pseudomonas paraeruginosa (strain DSM 24068 / PA7) (Pseudomonas aeruginosa (strain PA7)), this protein is UDP-N-acetylglucosamine 1-carboxyvinyltransferase.